Here is a 259-residue protein sequence, read N- to C-terminus: Putative zinc metalloprotease Rip2 (259 aa).

A run of 2 helical transmembrane segments spans residues 14–34 (PIFL…WLAG) and 39–59 (PLAY…SLCL). Histidine 60 contributes to the Zn(2+) binding site. Glutamate 61 is an active-site residue. Histidine 64 provides a ligand contact to Zn(2+). 4 helical membrane passes run 97-117 (GLPM…AVYV), 128-148 (TLVS…LLAA), 156-176 (IHAV…TALV), and 215-235 (LVLF…YWLF).

This sequence belongs to the peptidase M50B family. Zn(2+) serves as cofactor.

It is found in the cell membrane. The sequence is that of Putative zinc metalloprotease Rip2 (rip2) from Mycobacterium tuberculosis (strain ATCC 35801 / TMC 107 / Erdman).